Reading from the N-terminus, the 360-residue chain is Phospho-N-acetylmuramoyl-pentapeptide-transferase (360 aa).

Helical transmembrane passes span 21–41 (YITV…LWIG), 73–93 (TMGG…WANL), 94–114 (ANPY…IGFV), 132–152 (WKYF…YAIG), 168–188 (IMPQ…VGTS), 199–219 (GLAI…AWAT), 235–255 (FSAE…GFLW), 263–283 (VFMG…VAVL), 288–308 (FLLV…ILQV), and 338–358 (VIVR…VTLK).

The protein belongs to the glycosyltransferase 4 family. MraY subfamily. The cofactor is Mg(2+).

The protein localises to the cell inner membrane. It carries out the reaction UDP-N-acetyl-alpha-D-muramoyl-L-alanyl-gamma-D-glutamyl-meso-2,6-diaminopimeloyl-D-alanyl-D-alanine + di-trans,octa-cis-undecaprenyl phosphate = di-trans,octa-cis-undecaprenyl diphospho-N-acetyl-alpha-D-muramoyl-L-alanyl-D-glutamyl-meso-2,6-diaminopimeloyl-D-alanyl-D-alanine + UMP. It participates in cell wall biogenesis; peptidoglycan biosynthesis. Catalyzes the initial step of the lipid cycle reactions in the biosynthesis of the cell wall peptidoglycan: transfers peptidoglycan precursor phospho-MurNAc-pentapeptide from UDP-MurNAc-pentapeptide onto the lipid carrier undecaprenyl phosphate, yielding undecaprenyl-pyrophosphoryl-MurNAc-pentapeptide, known as lipid I. In Pasteurella multocida (strain Pm70), this protein is Phospho-N-acetylmuramoyl-pentapeptide-transferase.